Here is a 623-residue protein sequence, read N- to C-terminus: (-)-limonene synthase TPS1, chloroplastic (623 aa).

Residues 1-60 constitute a chloroplast transit peptide; that stretch reads MQCIAFHQFASSSSLPIWSSIDNRFTPKTSITSISKPKPKLKSKSNLKSRSRSSTCYPIQ. The segment at 29–52 is disordered; it reads TSITSISKPKPKLKSKSNLKSRSR. Basic residues predominate over residues 37–51; that stretch reads PKPKLKSKSNLKSRS. Positions 337, 374, 378, 516, and 519 each coordinate (2E)-geranyl diphosphate. Mg(2+) is bound by residues D374 and D378. Positions 374–378 match the DDXXD motif motif; sequence DDMHD. Mg(2+)-binding residues include D519, T523, and E527.

This sequence belongs to the terpene synthase family. Tpsb subfamily. The cofactor is Mg(2+). Requires Mn(2+) as cofactor. K(+) serves as cofactor. In terms of tissue distribution, trichome.

The protein localises to the plastid. It is found in the chloroplast. It catalyses the reaction (2E)-geranyl diphosphate = (4S)-limonene + diphosphate. The catalysed reaction is (2E)-geranyl diphosphate = terpinolene + diphosphate. The enzyme catalyses (2E)-geranyl diphosphate = (1R,5R)-alpha-pinene + diphosphate. It carries out the reaction (2E)-geranyl diphosphate = (1R,5R)-beta-pinene + diphosphate. It catalyses the reaction (2E)-geranyl diphosphate = beta-myrcene + diphosphate. The catalysed reaction is (2E)-geranyl diphosphate = (4R)-limonene + diphosphate. It participates in secondary metabolite biosynthesis; terpenoid biosynthesis. The protein operates within terpene metabolism; (4S)-limonene biosynthesis; (4S)-limonene from geranyl diphosphate: step 1/1. Its function is as follows. Involved in monoterpene (C10) olefins biosynthesis, constituants of cannabinoids and terpenoids-rich resins. Catalyzes mainly the conversion of (2E)-geranyl diphosphate to (-)-limonene, and also produces minor products such as (+)-limonene, (+)-alpha-pinene, terpinolene, (+)-beta-pinene and beta-myrcene. This is (-)-limonene synthase TPS1, chloroplastic from Cannabis sativa (Hemp).